The primary structure comprises 436 residues: Elongation factor 1-gamma-A (436 aa).

The GST N-terminal domain maps to 2–87 (AGGTLYTYPD…YVGNDELRGT (86 aa)). The 134-residue stretch at 88-221 (TRLHQAQVIQ…KMAQFDAKKF (134 aa)) folds into the GST C-terminal domain. 2 stretches are compositionally biased toward basic and acidic residues: residues 221–249 (FAEM…EKKK) and 265–278 (SEKA…SKDP). The interval 221-278 (FAEMQPKKETPKKEKPAKEPKKEKEEKKKAAPTPAPAPEDDLDESEKALAAEPKSKDP) is disordered. The 162-residue stretch at 275 to 436 (SKDPYAHLPK…KPFNQGKIFK (162 aa)) folds into the EF-1-gamma C-terminal domain.

In terms of assembly, EF-1 is composed of four subunits: alpha, beta, delta, and gamma. In terms of processing, phosphorylated by CDK1. The N-terminus is blocked.

Functionally, probably plays a role in anchoring the complex to other cellular components. This chain is Elongation factor 1-gamma-A (eef1g-a), found in Xenopus laevis (African clawed frog).